The sequence spans 204 residues: Phosphoheptose isomerase (204 aa).

Residues 38 to 199 (MAVALARGGK…LFEAVMELGP (162 aa)) form the SIS domain. 53-55 (NGG) contacts substrate. Zn(2+) is bound by residues His-62 and Glu-66. Residues Glu-66, 95 to 96 (ND), 121 to 123 (STS), Ser-126, and Gln-172 contribute to the substrate site. Residues Gln-172 and His-180 each contribute to the Zn(2+) site.

The protein belongs to the SIS family. GmhA subfamily. As to quaternary structure, homotetramer. Requires Zn(2+) as cofactor.

It is found in the cytoplasm. The catalysed reaction is 2 D-sedoheptulose 7-phosphate = D-glycero-alpha-D-manno-heptose 7-phosphate + D-glycero-beta-D-manno-heptose 7-phosphate. The protein operates within carbohydrate biosynthesis; D-glycero-D-manno-heptose 7-phosphate biosynthesis; D-glycero-alpha-D-manno-heptose 7-phosphate and D-glycero-beta-D-manno-heptose 7-phosphate from sedoheptulose 7-phosphate: step 1/1. Its function is as follows. Catalyzes the isomerization of sedoheptulose 7-phosphate in D-glycero-D-manno-heptose 7-phosphate. The protein is Phosphoheptose isomerase of Solidesulfovibrio magneticus (strain ATCC 700980 / DSM 13731 / RS-1) (Desulfovibrio magneticus).